The following is a 615-amino-acid chain: MSKIIGIDLGTTNSAVAVLEGGEPKIITNPDGGRTTPSVVSFKNGESQVGDVAKRQAITNPDTIISIKSHMGEAGYKVNANGKDYTPQEISAMILQYIKGYAEDYLGEKVEKAVITVPAYFNDAQRQATKDAGKIAGLEVERIINEPTAAALAYGLDKLDKDEKILVYDLGGGTFDVSILELGDGVFEVLSTNGDTHLGGDDFDNKVIDYLAEQFKSENGVDLKDDKLALQRLKDAAESAKKTLSSANEAQIDLPFIASGDNGPLHLQTSLTRAKFNELTADLIKKAEQPVLSALKDAGLSFSDIDEVILNGGSTRIPAVQESVKKMTGKEPNHSINPDEAVALGAAVQGGVITGDVKDVVLLDVTPLSLGIETMGGVFTKLIERNTTIPTSKSQVFSTAADNQPAVDIHVLQGERSMAADNKTLGRFQLADIPAAPRGVPQIEVTFDIDRNGIVNVSAKDLGTQKEQKITIQAAGGLSDEEIEKMMNDAKANEEADAKKKEAVDTRNEADQLIFQTEKTLEEVGDKLGDDEKKPTQDALEALKKAKEDAAADDADLTDLKAKSEELTKVAGELAMKLYQQAAPKDGAEGDAKSADDNTVDGDFEEVDPNKDDKK.

The residue at position 174 (Thr-174) is a Phosphothreonine; by autocatalysis. Positions 581–615 (QAAPKDGAEGDAKSADDNTVDGDFEEVDPNKDDKK) are disordered. A compositionally biased stretch (basic and acidic residues) spans 586–596 (DGAEGDAKSAD). The segment covering 598-607 (NTVDGDFEEV) has biased composition (acidic residues).

The protein belongs to the heat shock protein 70 family.

Acts as a chaperone. This chain is Chaperone protein DnaK, found in Leuconostoc mesenteroides subsp. mesenteroides (strain ATCC 8293 / DSM 20343 / BCRC 11652 / CCM 1803 / JCM 6124 / NCDO 523 / NBRC 100496 / NCIMB 8023 / NCTC 12954 / NRRL B-1118 / 37Y).